Reading from the N-terminus, the 429-residue chain is Trigger factor (429 aa).

The PPIase FKBP-type domain maps to 161-246; the sequence is GDRLSIDFKG…INEIASPKEL (86 aa).

The protein belongs to the FKBP-type PPIase family. Tig subfamily.

It localises to the cytoplasm. It carries out the reaction [protein]-peptidylproline (omega=180) = [protein]-peptidylproline (omega=0). Involved in protein export. Acts as a chaperone by maintaining the newly synthesized protein in an open conformation. Functions as a peptidyl-prolyl cis-trans isomerase. The sequence is that of Trigger factor from Vesicomyosocius okutanii subsp. Calyptogena okutanii (strain HA).